The chain runs to 612 residues: Dihydroxy-acid dehydratase (612 aa).

Residue aspartate 81 coordinates Mg(2+). Cysteine 122 serves as a coordination point for [2Fe-2S] cluster. Positions 123 and 124 each coordinate Mg(2+). An N6-carboxylysine modification is found at lysine 124. Cysteine 195 lines the [2Fe-2S] cluster pocket. Glutamate 491 provides a ligand contact to Mg(2+). The active-site Proton acceptor is serine 517.

Belongs to the IlvD/Edd family. In terms of assembly, homodimer. The cofactor is [2Fe-2S] cluster. Mg(2+) serves as cofactor.

It carries out the reaction (2R)-2,3-dihydroxy-3-methylbutanoate = 3-methyl-2-oxobutanoate + H2O. The catalysed reaction is (2R,3R)-2,3-dihydroxy-3-methylpentanoate = (S)-3-methyl-2-oxopentanoate + H2O. The protein operates within amino-acid biosynthesis; L-isoleucine biosynthesis; L-isoleucine from 2-oxobutanoate: step 3/4. Its pathway is amino-acid biosynthesis; L-valine biosynthesis; L-valine from pyruvate: step 3/4. In terms of biological role, functions in the biosynthesis of branched-chain amino acids. Catalyzes the dehydration of (2R,3R)-2,3-dihydroxy-3-methylpentanoate (2,3-dihydroxy-3-methylvalerate) into 2-oxo-3-methylpentanoate (2-oxo-3-methylvalerate) and of (2R)-2,3-dihydroxy-3-methylbutanoate (2,3-dihydroxyisovalerate) into 2-oxo-3-methylbutanoate (2-oxoisovalerate), the penultimate precursor to L-isoleucine and L-valine, respectively. This is Dihydroxy-acid dehydratase from Rhizobium leguminosarum bv. trifolii (strain WSM2304).